We begin with the raw amino-acid sequence, 310 residues long: tRNA dimethylallyltransferase (310 aa).

ATP is bound at residue 9–16 (GPTAVGKT). Residue 11-16 (TAVGKT) participates in substrate binding. The interaction with substrate tRNA stretch occupies residues 34 to 37 (DSMQ).

Belongs to the IPP transferase family. As to quaternary structure, monomer. Mg(2+) serves as cofactor.

The enzyme catalyses adenosine(37) in tRNA + dimethylallyl diphosphate = N(6)-dimethylallyladenosine(37) in tRNA + diphosphate. In terms of biological role, catalyzes the transfer of a dimethylallyl group onto the adenine at position 37 in tRNAs that read codons beginning with uridine, leading to the formation of N6-(dimethylallyl)adenosine (i(6)A). This is tRNA dimethylallyltransferase from Syntrophomonas wolfei subsp. wolfei (strain DSM 2245B / Goettingen).